The following is a 102-amino-acid chain: Small ribosomal subunit protein uS10 (102 aa).

Belongs to the universal ribosomal protein uS10 family. As to quaternary structure, part of the 30S ribosomal subunit.

Involved in the binding of tRNA to the ribosomes. This chain is Small ribosomal subunit protein uS10, found in Geobacter metallireducens (strain ATCC 53774 / DSM 7210 / GS-15).